Reading from the N-terminus, the 408-residue chain is tRNA-specific 2-thiouridylase MnmA (408 aa).

Residues 38–45 (GMSGGVDS) and Met64 each bind ATP. The interaction with target base in tRNA stretch occupies residues 124 to 126 (NPD). Cys129 serves as the catalytic Nucleophile. The cysteines at positions 129 and 231 are disulfide-linked. Gly153 is a binding site for ATP. The interaction with tRNA stretch occupies residues 181 to 183 (KDQ). Cys231 functions as the Cysteine persulfide intermediate in the catalytic mechanism. Residues 348-349 (RY) form an interaction with tRNA region.

Belongs to the MnmA/TRMU family.

The protein localises to the cytoplasm. The enzyme catalyses S-sulfanyl-L-cysteinyl-[protein] + uridine(34) in tRNA + AH2 + ATP = 2-thiouridine(34) in tRNA + L-cysteinyl-[protein] + A + AMP + diphosphate + H(+). Its function is as follows. Catalyzes the 2-thiolation of uridine at the wobble position (U34) of tRNA, leading to the formation of s(2)U34. The sequence is that of tRNA-specific 2-thiouridylase MnmA from Psychrobacter arcticus (strain DSM 17307 / VKM B-2377 / 273-4).